Consider the following 393-residue polypeptide: Acetyl-CoA acetyltransferase (393 aa).

C90 acts as the Acyl-thioester intermediate in catalysis. Residues H349 and C379 each act as proton acceptor in the active site.

The protein belongs to the thiolase-like superfamily. Thiolase family. Homotetramer.

It is found in the cytoplasm. It catalyses the reaction 2 acetyl-CoA = acetoacetyl-CoA + CoA. It functions in the pathway biopolymer metabolism; poly-(R)-3-hydroxybutanoate biosynthesis. The protein operates within metabolic intermediate biosynthesis; (R)-mevalonate biosynthesis; (R)-mevalonate from acetyl-CoA: step 1/3. This is Acetyl-CoA acetyltransferase from Rhizobium meliloti (strain 1021) (Ensifer meliloti).